The sequence spans 429 residues: Saccharopine dehydrogenase-like oxidoreductase (429 aa).

Alanine 2 is modified (N-acetylalanine). The residue at position 217 (serine 217) is a Phosphoserine.

Belongs to the saccharopine dehydrogenase family.

The sequence is that of Saccharopine dehydrogenase-like oxidoreductase (SCCPDH) from Pongo abelii (Sumatran orangutan).